A 324-amino-acid chain; its full sequence is Putative glycosyltransferase R655 (324 aa).

Belongs to the glycosyltransferase 25 family.

The protein is Putative glycosyltransferase R655 of Acanthamoeba polyphaga (Amoeba).